Reading from the N-terminus, the 58-residue chain is Isocitrate lyase (58 aa).

Belongs to the isocitrate lyase/PEP mutase superfamily. Isocitrate lyase family. As to quaternary structure, homotetramer. Requires Mg(2+) as cofactor.

Its subcellular location is the glyoxysome. The catalysed reaction is D-threo-isocitrate = glyoxylate + succinate. It functions in the pathway carbohydrate metabolism; glyoxylate cycle; (S)-malate from isocitrate: step 1/2. Involved in storage lipid mobilization during the growth of higher plant seedling. The polypeptide is Isocitrate lyase (Helianthus annuus (Common sunflower)).